Reading from the N-terminus, the 294-residue chain is Homoserine kinase (294 aa).

ATP is bound at residue 83 to 93 (PLARGLGSSAS).

This sequence belongs to the GHMP kinase family. Homoserine kinase subfamily.

The protein localises to the cytoplasm. It carries out the reaction L-homoserine + ATP = O-phospho-L-homoserine + ADP + H(+). It participates in amino-acid biosynthesis; L-threonine biosynthesis; L-threonine from L-aspartate: step 4/5. Its function is as follows. Catalyzes the ATP-dependent phosphorylation of L-homoserine to L-homoserine phosphate. The chain is Homoserine kinase from Oceanobacillus iheyensis (strain DSM 14371 / CIP 107618 / JCM 11309 / KCTC 3954 / HTE831).